Here is a 97-residue protein sequence, read N- to C-terminus: Conotoxin Cal6.1e (97 aa).

A signal peptide spans 1-22 (MKLTTVLIVAVLVLAACQFTVT). Residues 23–49 (DNSGDDTENPSLRSAGENQNPDSTKTI) are disordered. The propeptide occupies 23–60 (DNSGDDTENPSLRSAGENQNPDSTKTITARATRARTNM). Positions 31 to 45 (NPSLRSAGENQNPDS) are enriched in polar residues. Disulfide bonds link C71–C87, C78–C91, and C86–C96.

The protein belongs to the conotoxin O1 superfamily. Expressed by the venom duct.

The protein resides in the secreted. Functionally, probable neurotoxin with unknown target. Possibly targets ion channels. The protein is Conotoxin Cal6.1e of Californiconus californicus (California cone).